The chain runs to 364 residues: DNA polymerase IV (364 aa).

The 181-residue stretch at 6 to 186 (IIHIDMDAFY…LPIESFWGVG (181 aa)) folds into the UmuC domain. The Mg(2+) site is built by Asp10 and Asp104. The active site involves Glu105.

The protein belongs to the DNA polymerase type-Y family. As to quaternary structure, monomer. It depends on Mg(2+) as a cofactor.

Its subcellular location is the cytoplasm. The catalysed reaction is DNA(n) + a 2'-deoxyribonucleoside 5'-triphosphate = DNA(n+1) + diphosphate. Functionally, poorly processive, error-prone DNA polymerase involved in untargeted mutagenesis. Copies undamaged DNA at stalled replication forks, which arise in vivo from mismatched or misaligned primer ends. These misaligned primers can be extended by PolIV. Exhibits no 3'-5' exonuclease (proofreading) activity. May be involved in translesional synthesis, in conjunction with the beta clamp from PolIII. This is DNA polymerase IV from Bacteroides fragilis (strain YCH46).